A 271-amino-acid polypeptide reads, in one-letter code: 3-methyl-2-oxobutanoate hydroxymethyltransferase (271 aa).

The Mg(2+) site is built by D53 and D92. 3-methyl-2-oxobutanoate-binding positions include 53 to 54 (DS), D92, and K120. A Mg(2+)-binding site is contributed by E122. E189 acts as the Proton acceptor in catalysis.

Belongs to the PanB family. As to quaternary structure, homodecamer; pentamer of dimers. It depends on Mg(2+) as a cofactor.

It is found in the cytoplasm. The catalysed reaction is 3-methyl-2-oxobutanoate + (6R)-5,10-methylene-5,6,7,8-tetrahydrofolate + H2O = 2-dehydropantoate + (6S)-5,6,7,8-tetrahydrofolate. It functions in the pathway cofactor biosynthesis; (R)-pantothenate biosynthesis; (R)-pantoate from 3-methyl-2-oxobutanoate: step 1/2. Functionally, catalyzes the reversible reaction in which hydroxymethyl group from 5,10-methylenetetrahydrofolate is transferred onto alpha-ketoisovalerate to form ketopantoate. This chain is 3-methyl-2-oxobutanoate hydroxymethyltransferase, found in Paraburkholderia phymatum (strain DSM 17167 / CIP 108236 / LMG 21445 / STM815) (Burkholderia phymatum).